Reading from the N-terminus, the 258-residue chain is Acetylglutamate kinase (258 aa).

Residues 44-45 (GG), R66, and N158 each bind substrate. ATP contacts are provided by residues 181–186 (DVSGIL) and 209–211 (IIT).

This sequence belongs to the acetylglutamate kinase family. ArgB subfamily. Homodimer.

The protein resides in the cytoplasm. It carries out the reaction N-acetyl-L-glutamate + ATP = N-acetyl-L-glutamyl 5-phosphate + ADP. Its pathway is amino-acid biosynthesis; L-arginine biosynthesis; N(2)-acetyl-L-ornithine from L-glutamate: step 2/4. Functionally, catalyzes the ATP-dependent phosphorylation of N-acetyl-L-glutamate. In Yersinia pestis bv. Antiqua (strain Antiqua), this protein is Acetylglutamate kinase.